The primary structure comprises 432 residues: Diaminopimelate decarboxylase (432 aa).

Lysine 66 carries the post-translational modification N6-(pyridoxal phosphate)lysine. Pyridoxal 5'-phosphate contacts are provided by residues glycine 248 and 290 to 293 (EPGR). Substrate-binding residues include arginine 293, arginine 330, and tyrosine 334. Residue cysteine 361 is the Proton donor of the active site. Residues glutamate 362 and tyrosine 390 each coordinate substrate. Tyrosine 390 is a binding site for pyridoxal 5'-phosphate.

Belongs to the Orn/Lys/Arg decarboxylase class-II family. LysA subfamily. Homodimer. Pyridoxal 5'-phosphate serves as cofactor.

It carries out the reaction meso-2,6-diaminopimelate + H(+) = L-lysine + CO2. It functions in the pathway amino-acid biosynthesis; L-lysine biosynthesis via DAP pathway; L-lysine from DL-2,6-diaminopimelate: step 1/1. Its function is as follows. Specifically catalyzes the decarboxylation of meso-diaminopimelate (meso-DAP) to L-lysine. The sequence is that of Diaminopimelate decarboxylase from Bacillus methanolicus.